The chain runs to 422 residues: Dihydrolipoyllysine-residue succinyltransferase component of 2-oxoglutarate dehydrogenase complex (422 aa).

The Lipoyl-binding domain occupies 1–76; sequence MPEVKVPELA…EVGQAIAIIG (76 aa). An N6-lipoyllysine modification is found at Lys42. Residues 77-184 are disordered; that stretch reads EGSGNASKEN…APAKEEKKYN (108 aa). Polar residues-rich tracts occupy residues 80 to 94 and 116 to 130; these read GNAS…TPQQ and NQAN…NATP. A Peripheral subunit-binding (PSBD) domain is found at 127–163; the sequence is NATPSARRYARENGVNLAEVSPKTNDVVRKEDIDKKQ. Over residues 152-163 the composition is skewed to basic and acidic residues; it reads DVVRKEDIDKKQ. Residues 164–176 are compositionally biased toward low complexity; that stretch reads QAPASTQTTQQAP. Catalysis depends on residues His393 and Asp397.

Belongs to the 2-oxoacid dehydrogenase family. As to quaternary structure, forms a 24-polypeptide structural core with octahedral symmetry. Part of the 2-oxoglutarate dehydrogenase (OGDH) complex composed of E1 (2-oxoglutarate dehydrogenase), E2 (dihydrolipoamide succinyltransferase) and E3 (dihydrolipoamide dehydrogenase); the complex contains multiple copies of the three enzymatic components (E1, E2 and E3). (R)-lipoate is required as a cofactor.

It catalyses the reaction N(6)-[(R)-dihydrolipoyl]-L-lysyl-[protein] + succinyl-CoA = N(6)-[(R)-S(8)-succinyldihydrolipoyl]-L-lysyl-[protein] + CoA. It participates in amino-acid degradation; L-lysine degradation via saccharopine pathway; glutaryl-CoA from L-lysine: step 6/6. In terms of biological role, E2 component of the 2-oxoglutarate dehydrogenase (OGDH) complex which catalyzes the second step in the conversion of 2-oxoglutarate to succinyl-CoA and CO(2). This Staphylococcus aureus (strain Mu50 / ATCC 700699) protein is Dihydrolipoyllysine-residue succinyltransferase component of 2-oxoglutarate dehydrogenase complex (odhB).